Consider the following 132-residue polypeptide: Replication enhancer protein (132 aa).

This sequence belongs to the geminiviridae replication enhancer protein family. As to quaternary structure, homooligomer. Interacts with the replication-associated protein (REP). Interacts with host proliferating cell nuclear antigen (PCNA). Interacts with host retinoblastoma-related protein 1 (RBR1), and may thereby deregulate the host cell cycle. Oligomerization and interaction with PCNA are necessary for optimal replication enhancement.

Its function is as follows. Increases viral DNA accumulation. Enhances infectivity and symptom expression. The chain is Replication enhancer protein from Tomato mottle virus (isolate Florida) (ToMoV).